A 73-amino-acid chain; its full sequence is Translation initiation factor IF-1 (73 aa).

The 72-residue stretch at 1–72 (MAKDDVIEVE…TKGRITYRFI (72 aa)) folds into the S1-like domain.

The protein belongs to the IF-1 family. As to quaternary structure, component of the 30S ribosomal translation pre-initiation complex which assembles on the 30S ribosome in the order IF-2 and IF-3, IF-1 and N-formylmethionyl-tRNA(fMet); mRNA recruitment can occur at any time during PIC assembly.

It is found in the cytoplasm. In terms of biological role, one of the essential components for the initiation of protein synthesis. Stabilizes the binding of IF-2 and IF-3 on the 30S subunit to which N-formylmethionyl-tRNA(fMet) subsequently binds. Helps modulate mRNA selection, yielding the 30S pre-initiation complex (PIC). Upon addition of the 50S ribosomal subunit IF-1, IF-2 and IF-3 are released leaving the mature 70S translation initiation complex. This is Translation initiation factor IF-1 from Lactobacillus acidophilus (strain ATCC 700396 / NCK56 / N2 / NCFM).